The chain runs to 304 residues: Coenzyme PQQ synthesis protein B (304 aa).

Belongs to the PqqB family.

The protein operates within cofactor biosynthesis; pyrroloquinoline quinone biosynthesis. Its function is as follows. May be involved in the transport of PQQ or its precursor to the periplasm. In Pseudomonas aeruginosa (strain ATCC 15692 / DSM 22644 / CIP 104116 / JCM 14847 / LMG 12228 / 1C / PRS 101 / PAO1), this protein is Coenzyme PQQ synthesis protein B.